The following is a 329-amino-acid chain: Oxidoreductase sirO (329 aa).

Asp-54 contacts NADP(+). The active-site Proton donor is the Tyr-59. His-118 serves as a coordination point for substrate. Residues 148–149, Gln-174, 203–213, and 288–296 contribute to the NADP(+) site; these read SN, SPLCCGLLINA, and SSARQLEES.

It belongs to the aldo/keto reductase family. Aldo/keto reductase 2 subfamily.

The protein operates within mycotoxin biosynthesis. Its function is as follows. Oxidoreductase; part of the gene cluster that mediates the biosynthesis of sirodesmin PL, an epipolythiodioxopiperazine (ETP) characterized by a disulfide bridged cyclic dipeptide and that acts as a phytotoxin which is involved in the blackleg didease of canola. SirD catalyzes the O-prenylation of L-tyrosine (L-Tyr) in the presence of dimethylallyl diphosphate (DMAPP) to yield 4-O-dimethylallyl-L-Tyr, and therefore represents probably the first pathway-specific enzyme in the biosynthesis of sirodesmin PL. 4-O-dimethylallyl-L-Tyr, then undergoes condensation with L-Ser in a reaction catalyzed by the non-ribosomal peptide synthase sirP to form the diketopiperazine (DKP) backbone. Further bishydroxylation of the DKP performed by the cytochrome P450 monooxygenase sirC leads to the production of the intermediate phomamide. This step is essential to form the reactive thiol group required for toxicity of sirodesmin PL. The next steps of sirodesmin biosynthesis are not well understood yet, but some predictions could be made from intermediate compounds identification. Phomamide is converted into phomalizarine via oxidation, probably by sirT. Further oxidation, methylation (by sirM or sirN) and reduction steps convert phomalizarine to deacetyl sirodesmin. Finally, acetyltransferase sirH probably acetylates deacetyl sirodesmin to produce sirodesmin PL. The polypeptide is Oxidoreductase sirO (Leptosphaeria maculans (Blackleg fungus)).